Reading from the N-terminus, the 346-residue chain is Ornithine carbamoyltransferase, catabolic (346 aa).

Carbamoyl phosphate is bound by residues 58 to 61 (STRT), Asn-85, Arg-109, and 136 to 139 (HPTQ). L-ornithine-binding positions include Asn-168, Asp-239, and 243-244 (SL). Carbamoyl phosphate contacts are provided by residues 280-281 (CL) and Arg-332.

The protein belongs to the aspartate/ornithine carbamoyltransferase superfamily. OTCase family.

Its subcellular location is the cytoplasm. The enzyme catalyses carbamoyl phosphate + L-ornithine = L-citrulline + phosphate + H(+). The protein operates within amino-acid degradation; L-arginine degradation via ADI pathway; carbamoyl phosphate from L-arginine: step 2/2. Functionally, reversibly catalyzes the transfer of the carbamoyl group from carbamoyl phosphate (CP) to the N(epsilon) atom of ornithine (ORN) to produce L-citrulline. The protein is Ornithine carbamoyltransferase, catabolic of Mycoplasma pneumoniae (strain ATCC 29342 / M129 / Subtype 1) (Mycoplasmoides pneumoniae).